A 143-amino-acid polypeptide reads, in one-letter code: Cofilin (143 aa).

At serine 4 the chain carries Phosphoserine. Positions 5-137 constitute an ADF-H domain; it reads GVAVADESLT…SYDSVLERVS (133 aa).

The protein belongs to the actin-binding proteins ADF family. As to quaternary structure, interacts with actin and AIP1 in a ternary complex. The N-terminus is blocked.

Its subcellular location is the cytoplasm. The protein resides in the cytoskeleton. It is found in the nucleus matrix. In terms of biological role, controls reversibly actin polymerization and depolymerization in a pH-sensitive manner. It has the ability to bind G- and F-actin in a 1:1 ratio of cofilin to actin. Binding to F-actin is regulated by tropomyosin. It is the major component of intranuclear and cytoplasmic actin rods. Required for accumulation of actin at the cell division site via depolymerizing actin at the cell ends. In association with myosin II has a role in the assembly of the contractile ring via severing actin filaments. Involved in the maintenance of the contractile ring once formed. In association with profilin and capping protein, has a role in the mitotic reorganization of the actin cytoskeleton. In effect, yeast cofilin increases the rate of actin polymerization by making new ends available for actin subunit addition. Such a protein complex is important for the polarized growth of yeast cells. This Saccharomyces cerevisiae (strain ATCC 204508 / S288c) (Baker's yeast) protein is Cofilin (COF1).